Here is a 316-residue protein sequence, read N- to C-terminus: MGVAAVFTAVQSDLGALVSEASNSRSADIDLMTTAQILACMNAEDRKIADAVAAELPAIAQTVDRIVAAIGRGGRLIYIGAGTSGRLGVLDASECPPTFSVPPGMVVGLIAGGDTALRTSVEAAEDDEATGAEDVKAIGLTTKDVVIGIAVSGRTPFVMGAIDYARRIGAFTAALTCNPGSPMADLADIAISPVVGPEVVTGSTRLKSGTAQKMILNMLSTASMIRLGKTWGNRMVDVTISNRKLADRATAMLRDATGCSADDARTLLDQSNGSVKLAILMQITGCDADAARANLEAENGFLRKAIERAEKTPPQS.

In terms of domain architecture, SIS spans 66–229 (IVAAIGRGGR…STASMIRLGK (164 aa)). Glutamate 94 acts as the Proton donor in catalysis. Residue glutamate 125 is part of the active site.

This sequence belongs to the GCKR-like family. MurNAc-6-P etherase subfamily. Homodimer.

The enzyme catalyses N-acetyl-D-muramate 6-phosphate + H2O = N-acetyl-D-glucosamine 6-phosphate + (R)-lactate. The protein operates within amino-sugar metabolism; 1,6-anhydro-N-acetylmuramate degradation. Its pathway is amino-sugar metabolism; N-acetylmuramate degradation. It functions in the pathway cell wall biogenesis; peptidoglycan recycling. Specifically catalyzes the cleavage of the D-lactyl ether substituent of MurNAc 6-phosphate, producing GlcNAc 6-phosphate and D-lactate. Together with AnmK, is also required for the utilization of anhydro-N-acetylmuramic acid (anhMurNAc) either imported from the medium or derived from its own cell wall murein, and thus plays a role in cell wall recycling. The protein is N-acetylmuramic acid 6-phosphate etherase of Jannaschia sp. (strain CCS1).